The chain runs to 465 residues: Dihydrolipoyl dehydrogenase (465 aa).

Residues Glu-34 to Cys-42, Lys-51, and Gly-114 contribute to the FAD site. Residues Cys-42 and Cys-47 are joined by a disulfide bond. NAD(+) is bound by residues Gly-180–Ile-184, Glu-203, Val-237, and Ser-264–Arg-267. FAD contacts are provided by Asp-307 and Ala-315. Catalysis depends on His-439, which acts as the Proton acceptor.

Belongs to the class-I pyridine nucleotide-disulfide oxidoreductase family. It depends on FAD as a cofactor.

It is found in the cytoplasm. It carries out the reaction N(6)-[(R)-dihydrolipoyl]-L-lysyl-[protein] + NAD(+) = N(6)-[(R)-lipoyl]-L-lysyl-[protein] + NADH + H(+). In terms of biological role, the branched-chain alpha-keto dehydrogenase complex catalyzes the overall conversion of alpha-keto acids to acyl-CoA and CO(2). It contains multiple copies of 3 enzymatic components: branched-chain alpha-keto acid decarboxylase (E1), lipoamide acyltransferase (E2) and lipoamide dehydrogenase (E3). This is Dihydrolipoyl dehydrogenase (lpdA) from Chlamydia muridarum (strain MoPn / Nigg).